A 64-amino-acid polypeptide reads, in one-letter code: Large ribosomal subunit protein bL35 (64 aa).

Basic residues predominate over residues 1–15 (MPKNKTHSGASKRFR). The tract at residues 1 to 20 (MPKNKTHSGASKRFRVTGSG) is disordered.

This sequence belongs to the bacterial ribosomal protein bL35 family.

The protein is Large ribosomal subunit protein bL35 of Nocardioides sp. (strain ATCC BAA-499 / JS614).